We begin with the raw amino-acid sequence, 288 residues long: Movement protein (288 aa).

Belongs to the cucumovirus movement protein family.

The protein localises to the host cell junction. Its subcellular location is the host plasmodesma. Functionally, transports viral genome to neighboring plant cells directly through plasmosdesmata, without any budding. The movement protein allows efficient cell to cell propagation, by bypassing the host cell wall barrier. Acts by forming a tubular structure at the host plasmodesmata, enlarging it enough to allow free passage of virion capsids. This is Movement protein from Apium graveolens (Celery).